We begin with the raw amino-acid sequence, 800 residues long: Serine/threonine-protein kinase KIN4 (800 aa).

The region spanning 46–313 is the Protein kinase domain; it reads YIIGSTLGEG…LQTIKRHVWL (268 aa). Residues 52–60 and Lys80 each bind ATP; that span reads LGEGEFGKV. The Proton acceptor role is filled by Asp175. Disordered regions lie at residues 331-397 and 438-487; these read LQKE…GSKV and SARH…TSFT. Residues 348-358 are compositionally biased toward low complexity; sequence STYSSSASSYS. 2 positions are modified to phosphoserine: Ser365 and Ser388. Polar residues-rich tracts occupy residues 380–395 and 459–473; these read QLATSRPASPTFSTGS and GSPTTARTRNAPSSK. Residue Ser521 is modified to Phosphoserine. Disordered stretches follow at residues 629 to 661 and 678 to 754; these read EPTNSTDEDHVESQLENVGHSSNKSDASSDKDS and SLNG…PGRS. The span at 678–721 shows a compositional bias: polar residues; that stretch reads SLNGSRSTVESRTSKGNAPPVSSRNPSGQSNRSNIKITQQQPRN. Over residues 727–740 the composition is skewed to basic and acidic residues; the sequence is PNPDKKINDNRIRD. Position 748 is a phosphoserine (Ser748).

Belongs to the protein kinase superfamily. Ser/Thr protein kinase family.

The enzyme catalyses L-seryl-[protein] + ATP = O-phospho-L-seryl-[protein] + ADP + H(+). It catalyses the reaction L-threonyl-[protein] + ATP = O-phospho-L-threonyl-[protein] + ADP + H(+). This protein is probably a serine/threonine protein kinase. This Saccharomyces cerevisiae (strain ATCC 204508 / S288c) (Baker's yeast) protein is Serine/threonine-protein kinase KIN4 (KIN4).